A 221-amino-acid chain; its full sequence is 7-cyano-7-deazaguanine synthase (221 aa).

10–20 (FSGGQDSTTCL) lines the ATP pocket. The Zn(2+) site is built by Cys-186, Cys-195, Cys-198, and Cys-201.

Belongs to the QueC family. In terms of assembly, homodimer. The cofactor is Zn(2+).

It carries out the reaction 7-carboxy-7-deazaguanine + NH4(+) + ATP = 7-cyano-7-deazaguanine + ADP + phosphate + H2O + H(+). It functions in the pathway purine metabolism; 7-cyano-7-deazaguanine biosynthesis. Its function is as follows. Catalyzes the ATP-dependent conversion of 7-carboxy-7-deazaguanine (CDG) to 7-cyano-7-deazaguanine (preQ(0)). The sequence is that of 7-cyano-7-deazaguanine synthase from Geobacillus sp. (strain WCH70).